A 29-amino-acid polypeptide reads, in one-letter code: Glucagon (29 aa).

The protein belongs to the glucagon family.

The protein localises to the secreted. In terms of biological role, glucagon plays a key role in glucose metabolism and homeostasis. Regulates blood glucose by increasing gluconeogenesis and decreasing glycolysis. The polypeptide is Glucagon (GCG) (Struthio camelus (Common ostrich)).